The sequence spans 387 residues: Putative acid--amine ligase YjfC (387 aa).

101-103 (RMD) contacts ATP. Mg(2+) contacts are provided by aspartate 103, glutamate 116, and asparagine 118. ATP contacts are provided by residues lysine 265, lysine 302, glycine 309, glutamine 337, and 372-374 (LIT).

The protein belongs to the glutathionylspermidine synthase preATP-grasp family.

May be a ligase forming an amide bond. Shows ATPase activity. Despite its similarity to the C-terminal synthetase domain of Gss, is not a glutathionylspermidine (Gsp) synthetase. Cannot synthesize Gsp, glutathione (GSH), or GSH intermediates, from GSH and spermidine, cysteine and glutamate, gamma-glutamylcysteine and spermidine, and gamma-glutamylcysteine and glycine. Does not bind to Gsp. The polypeptide is Putative acid--amine ligase YjfC (yjfC) (Escherichia coli (strain K12)).